A 145-amino-acid chain; its full sequence is D-aminoacyl-tRNA deacylase (145 aa).

Positions 137–138 (GP) match the Gly-cisPro motif, important for rejection of L-amino acids motif.

This sequence belongs to the DTD family. In terms of assembly, homodimer.

It localises to the cytoplasm. It carries out the reaction glycyl-tRNA(Ala) + H2O = tRNA(Ala) + glycine + H(+). It catalyses the reaction a D-aminoacyl-tRNA + H2O = a tRNA + a D-alpha-amino acid + H(+). An aminoacyl-tRNA editing enzyme that deacylates mischarged D-aminoacyl-tRNAs. Also deacylates mischarged glycyl-tRNA(Ala), protecting cells against glycine mischarging by AlaRS. Acts via tRNA-based rather than protein-based catalysis; rejects L-amino acids rather than detecting D-amino acids in the active site. By recycling D-aminoacyl-tRNA to D-amino acids and free tRNA molecules, this enzyme counteracts the toxicity associated with the formation of D-aminoacyl-tRNA entities in vivo and helps enforce protein L-homochirality. The chain is D-aminoacyl-tRNA deacylase from Salmonella paratyphi C (strain RKS4594).